Consider the following 188-residue polypeptide: Peptidyl-tRNA hydrolase (188 aa).

TRNA is bound at residue Y14. Catalysis depends on H19, which acts as the Proton acceptor. TRNA is bound by residues Y64, N66, and N112.

Belongs to the PTH family. In terms of assembly, monomer.

It is found in the cytoplasm. The enzyme catalyses an N-acyl-L-alpha-aminoacyl-tRNA + H2O = an N-acyl-L-amino acid + a tRNA + H(+). Hydrolyzes ribosome-free peptidyl-tRNAs (with 1 or more amino acids incorporated), which drop off the ribosome during protein synthesis, or as a result of ribosome stalling. In terms of biological role, catalyzes the release of premature peptidyl moieties from peptidyl-tRNA molecules trapped in stalled 50S ribosomal subunits, and thus maintains levels of free tRNAs and 50S ribosomes. The sequence is that of Peptidyl-tRNA hydrolase from Clostridium tetani (strain Massachusetts / E88).